Consider the following 210-residue polypeptide: Proteasome subunit beta (210 aa).

Positions 1 to 10 are cleaved as a propeptide — removed in mature form; by autocatalysis; the sequence is MKELDQLTKG. The Nucleophile role is filled by Thr-11.

The protein belongs to the peptidase T1B family. The 20S proteasome core is composed of 14 alpha and 14 beta subunits that assemble into four stacked heptameric rings, resulting in a barrel-shaped structure. The two inner rings, each composed of seven catalytic beta subunits, are sandwiched by two outer rings, each composed of seven alpha subunits. The catalytic chamber with the active sites is on the inside of the barrel. Has a gated structure, the ends of the cylinder being occluded by the N-termini of the alpha-subunits. Is capped at one or both ends by the proteasome regulatory ATPase, PAN.

The protein resides in the cytoplasm. The enzyme catalyses Cleavage of peptide bonds with very broad specificity.. Its activity is regulated as follows. The formation of the proteasomal ATPase PAN-20S proteasome complex, via the docking of the C-termini of PAN into the intersubunit pockets in the alpha-rings, triggers opening of the gate for substrate entry. Interconversion between the open-gate and close-gate conformations leads to a dynamic regulation of the 20S proteasome proteolysis activity. In terms of biological role, component of the proteasome core, a large protease complex with broad specificity involved in protein degradation. In Methanopyrus kandleri (strain AV19 / DSM 6324 / JCM 9639 / NBRC 100938), this protein is Proteasome subunit beta.